The chain runs to 162 residues: Probable chemoreceptor glutamine deamidase CheD (162 aa).

The protein belongs to the CheD family.

The enzyme catalyses L-glutaminyl-[protein] + H2O = L-glutamyl-[protein] + NH4(+). Its function is as follows. Probably deamidates glutamine residues to glutamate on methyl-accepting chemotaxis receptors (MCPs), playing an important role in chemotaxis. This is Probable chemoreceptor glutamine deamidase CheD from Pyrococcus horikoshii (strain ATCC 700860 / DSM 12428 / JCM 9974 / NBRC 100139 / OT-3).